An 89-amino-acid chain; its full sequence is OMEGA-ectatommitoxin(02)-Rm1b (89 aa).

The first 30 residues, 1–30, serve as a signal peptide directing secretion; that stretch reads MKDSYISIVIAYLMVTFILVSSMPIEGEKG. Disulfide bonds link Cys39-Cys52, Cys47-Cys68, and Cys70-Cys79. One can recognise an EGF-like domain in the interval 43–80; that stretch reads YANYCFNGKCVHFVAQDEPGKPCYSCICDKFYIGKRCG.

This sequence belongs to the EGF domain peptide family. As to expression, expressed by the venom gland.

The protein resides in the secreted. Ant peptide with probable defensive activity which acts as a potent agonist of the mammalian epidermal growth factor receptor (EGFR). Mimics, both structurally and functionally, vertebrate epidermal growth factor (EGF) peptide hormones. In vivo, intraplantar injection in mice causes long-lasting (several days) hypersensitivity of the injected paw to both mechanical and thermal stimuli. Its long-lasting effect is unusual for venom toxins whose effects are usually immediate. One possible explanation is that it would reduce the duration of a nest attack, discourage future attacks, or enhance the actions of subsequent exposure to other pain-inducing venom peptides. In Rhytidoponera metallica (Australian green-headed ant), this protein is OMEGA-ectatommitoxin(02)-Rm1b.